A 168-amino-acid polypeptide reads, in one-letter code: Diphosphoinositol polyphosphate phosphohydrolase 1 (168 aa).

An N-acetylmethionine modification is found at Met-1. Substrate-binding positions include Arg-10, 18-20, and 39-41; these read KKR and SSR. One can recognise a Nudix hydrolase domain in the interval 17–144; it reads YKKRAACLCF…VQASYFETLR (128 aa). Gly-50 and Glu-66 together coordinate Mg(2+). The short motif at 51–72 is the Nudix box element; it reads GGMEPEEEPSVAAVREVCEEAG. Glu-69 (proton acceptor) is an active-site residue. Glu-70 provides a ligand contact to Mg(2+). Substrate-binding positions include 89-91, Arg-115, and Lys-133; that span reads RKH.

The protein belongs to the Nudix hydrolase family. DIPP subfamily. Monomer. The cofactor is Mg(2+). Mn(2+) serves as cofactor. Zn(2+) is required as a cofactor. As to expression, present in heart, lung, liver and spleen (at protein level). Widely expressed.

It is found in the cytoplasm. The protein resides in the nucleus. It carries out the reaction diphospho-myo-inositol polyphosphate + H2O = myo-inositol polyphosphate + phosphate.. The catalysed reaction is 5-diphospho-1D-myo-inositol 1,2,3,4,6-pentakisphosphate + H2O = 1D-myo-inositol hexakisphosphate + phosphate + H(+). It catalyses the reaction 3,5-bis(diphospho)-1D-myo-inositol 1,2,4,6-tetrakisphosphate + H2O = 3-diphospho-1D-myo-inositol 1,2,4,5,6-pentakisphosphate + phosphate + 2 H(+). The enzyme catalyses [phosphate](n+1) + n H2O = (n+1) phosphate + n H(+). It carries out the reaction P(1),P(5)-bis(5'-adenosyl) pentaphosphate + H2O = ADP + ATP + 2 H(+). The catalysed reaction is P(1),P(6)-bis(5'-adenosyl) hexaphosphate + H2O = 2 ATP + 2 H(+). It catalyses the reaction P(1),P(4)-bis(5'-adenosyl) tetraphosphate + H2O = AMP + ATP + 2 H(+). The enzyme catalyses a 5'-end (N(7)-methyl 5'-triphosphoguanosine)-ribonucleoside in mRNA + H2O = N(7)-methyl-GMP + a 5'-end diphospho-ribonucleoside in mRNA + 2 H(+). It carries out the reaction a 5'-end (N(7)-methyl 5'-triphosphoguanosine)-ribonucleoside in mRNA + H2O = N(7)-methyl-GDP + a 5'-end phospho-ribonucleoside in mRNA + 2 H(+). Functionally, cleaves a beta-phosphate from the diphosphate groups in PP-InsP5 (diphosphoinositol pentakisphosphate) and [PP]2-InsP4 (bisdiphosphoinositol tetrakisphosphate), suggesting that it may play a role in signal transduction. InsP6 (inositol hexakisphosphate) is not a substrate. Also able to catalyze the hydrolysis of dinucleoside oligophosphates, with diadenosine 5',5'''-P1,P6-hexaphosphate (Ap6A) and diadenosine 5',5'''- P1,P5-pentaphosphate (Ap5A) being the preferred substrates. The major reaction products are ADP and p4a from Ap6A and ADP and ATP from Ap5A. Also able to hydrolyze 5- phosphoribose 1-diphosphate. Acts as a negative regulator of the ERK1/2 pathway. Acts as a decapping enzyme that can hydrolyze both monomethylated and unmethylated capped RNAs. Hydrolyzes monomethylated capped RNA after both the alpha- and beta-phosphates generating m7GMP + ppRNA and m7GDP + pRNA. Modulates the stability of a subset of mRNAs implicated in cell motility. Divalent cations zinc, magnesium and manganese determine its substrate specificity. Exhibits diphosphoinositol polyphosphate phosphohydrolase in the presence of magnesium ions, diadenosine hexaphosphate hydrolase activity in the presence of manganese ions and endopolyphosphatase activity in the presence of zinc ions. Plays an important role in limiting DNA damage and maintaining cell survival upon oxidative stress via its endopolyphosphatase activity. This chain is Diphosphoinositol polyphosphate phosphohydrolase 1, found in Mus musculus (Mouse).